The following is a 95-amino-acid chain: Small ribosomal subunit protein bS20c (95 aa).

Residues 76-95 (NGSAKKAKLTKRLKEKKISL) form a disordered region. The span at 80 to 95 (KKAKLTKRLKEKKISL) shows a compositional bias: basic residues.

This sequence belongs to the bacterial ribosomal protein bS20 family.

It localises to the plastid. The protein localises to the chloroplast. Binds directly to 16S ribosomal RNA. In Guillardia theta (Cryptophyte), this protein is Small ribosomal subunit protein bS20c.